We begin with the raw amino-acid sequence, 245 residues long: Complement C1q subcomponent subunit A (245 aa).

The N-terminal stretch at 1 to 22 is a signal peptide; sequence METSQGWLVACVLTMTLVWTVA. The disordered stretch occupies residues 28-114; it reads APNGKDGAPG…NPGNIRDQPR (87 aa). Positions 31–109 constitute a Collagen-like domain; that stretch reads GKDGAPGNPG…KGVKGNPGNI (79 aa). A 4-hydroxyproline mark is found at Pro-39 and Pro-45. Position 48 is a 5-hydroxylysine (Lys-48). A glycan (O-linked (Gal...) hydroxylysine; alternate) is linked at Lys-48. A 4-hydroxyproline modification is found at Pro-54. Position 67 is a 5-hydroxylysine (Lys-67). Lys-67 carries O-linked (Gal...) hydroxylysine; alternate glycosylation. A 4-hydroxyproline mark is found at Pro-79 and Pro-85. Residues 79–99 show a composition bias toward low complexity; sequence PGNVGLPGPSGPLGDSGPQGL. The residue at position 100 (Lys-100) is a 5-hydroxylysine. Lys-100 carries an O-linked (Gal...) hydroxylysine; alternate glycan. The 136-residue stretch at 110 to 245 folds into the C1q domain; the sequence is RDQPRPAFSA…FSGFLIFPSA (136 aa). N-linked (GlcNAc...) asparagine glycosylation is present at Asn-146. Gln-199 is a Ca(2+) binding site.

Core component of the complement C1 complex, a calcium-dependent complex composed of 1 molecule of the C1Q subcomplex, 2 molecules of C1R and 2 molecules of C1S. The C1Q subcomplex is composed 18 subunits: 3 chains of C1QA, C1QB, and C1QC trimerize to form 6 collagen-like triple helices connected to six globular ligand-recognition modules (C1q domain). Interacts with CR1 (via Sushi 24 and Sushi 25 domains). Interacts (via C-terminus) with CD33; this interaction activates CD33 inhibitory motifs. O-linked glycans are assumed to be the Glc-Gal disaccharides typically found as secondary modifications of hydroxylated lysines in collagen-like domains.

The protein resides in the secreted. It localises to the cell surface. Its activity is regulated as follows. The C1Q subcomplex is inhibited by sulfated molecules, such as triterpenoid sulfates, heparan sulfate, or chondroitin sulfates. Functionally, core component of the complement C1 complex, a multiprotein complex that initiates the classical pathway of the complement system, a cascade of proteins that leads to phagocytosis and breakdown of pathogens and signaling that strengthens the adaptive immune system. The classical complement pathway is initiated by the C1Q subcomplex of the C1 complex, which specifically binds IgG or IgM immunoglobulins complexed with antigens, forming antigen-antibody complexes on the surface of pathogens: C1QA, together with C1QB and C1QC, specifically recognizes and binds the Fc regions of IgG or IgM via its C1q domain. Immunoglobulin-binding activates the proenzyme C1R, which cleaves C1S, initiating the proteolytic cascade of the complement system. The C1Q subcomplex is activated by a hexamer of IgG complexed with antigens, while it is activated by a pentameric IgM. The C1Q subcomplex also recognizes and binds phosphatidylserine exposed on the surface of cells undergoing programmed cell death, possibly promoting activation of the complement system. The sequence is that of Complement C1q subcomponent subunit A from Mus musculus (Mouse).